The following is a 334-amino-acid chain: Transcription factor TGA2.1 (334 aa).

Residues 1 to 13 (MADASSRTDTSIV) are compositionally biased toward polar residues. The interval 1–49 (MADASSRTDTSIVVDNDDKNHQLENGHSGAVMASNSSDRSDRSDKLMDQ) is disordered. Positions 38 to 49 (DRSDRSDKLMDQ) are enriched in basic and acidic residues. One can recognise a bZIP domain in the interval 48–92 (DQKTIRRLAQNREAARKSRLRKKAYVQQLESSKLKLAQLEQELQK). Residues 50 to 70 (KTIRRLAQNREAARKSRLRKK) are basic motif. A leucine-zipper region spans residues 76-90 (LESSKLKLAQLEQEL). Residues 115-331 (ALTFDLEYTR…RALSSLWLAR (217 aa)) form the DOG1 domain.

This sequence belongs to the bZIP family. In terms of assembly, interacts with NPR1/NH1 and NPR3/NH3.

The protein localises to the nucleus. Its function is as follows. Plays a negative role in rice basal defense responses to the bacterial blight pathogen Xanthomomas oryzae pv. oryzae (Xoo). May function in both positive and negative regulation of rice defense genes. Binds DNA in vitro. Acts as a transcriptional activator when bound to NPR1/NH1 in vitro. Binds to the promoter sequence of CRK10 in vitro. This Oryza sativa subsp. japonica (Rice) protein is Transcription factor TGA2.1.